We begin with the raw amino-acid sequence, 269 residues long: 3-deoxy-manno-octulosonate cytidylyltransferase (269 aa).

The protein belongs to the KdsB family.

It is found in the cytoplasm. It carries out the reaction 3-deoxy-alpha-D-manno-oct-2-ulosonate + CTP = CMP-3-deoxy-beta-D-manno-octulosonate + diphosphate. The protein operates within nucleotide-sugar biosynthesis; CMP-3-deoxy-D-manno-octulosonate biosynthesis; CMP-3-deoxy-D-manno-octulosonate from 3-deoxy-D-manno-octulosonate and CTP: step 1/1. Its pathway is bacterial outer membrane biogenesis; lipopolysaccharide biosynthesis. Activates KDO (a required 8-carbon sugar) for incorporation into bacterial lipopolysaccharide in Gram-negative bacteria. This is 3-deoxy-manno-octulosonate cytidylyltransferase from Cupriavidus taiwanensis (strain DSM 17343 / BCRC 17206 / CCUG 44338 / CIP 107171 / LMG 19424 / R1) (Ralstonia taiwanensis (strain LMG 19424)).